The sequence spans 716 residues: Zinc finger protein 840 (716 aa).

The KRAB domain maps to 42–113 (VRFRDVAVVF…EREVTGDPCP (72 aa)). 18 C2H2-type zinc fingers span residues 151–173 (YECD…QKIH), 207–229 (FECN…QSMH), 235–257 (YKCD…QRFH), 277–299 (FSCN…LLIH), 305–327 (YTCN…QRTH), 333–355 (HKCD…QKTH), 361–383 (FSCN…QQIH), 389–411 (FICS…KGTH), 417–439 (YQCT…QKTH), 445–467 (FACN…KKIH), 473–495 (YECG…KKIH), 501–523 (FVCN…QRTH), 549–571 (FPCN…QQIH), 577–599 (FICS…KGTH), 605–627 (YQCT…QKTH), 633–655 (FTCN…KKIH), 661–683 (YECG…KKIH), and 689–711 (FVCN…QITH). The segment at 515-548 (KLSRHQRTHNKKENSSKSVSNLNKHQKTHAGEKP) is disordered.

Belongs to the krueppel C2H2-type zinc-finger protein family.

Its subcellular location is the nucleus. Its function is as follows. May be involved in transcriptional regulation. This is Zinc finger protein 840 (ZNF840P) from Homo sapiens (Human).